Here is a 93-residue protein sequence, read N- to C-terminus: Large ribosomal subunit protein uL23 (93 aa).

This sequence belongs to the universal ribosomal protein uL23 family. As to quaternary structure, part of the 50S ribosomal subunit. Contacts protein L29, and trigger factor when it is bound to the ribosome.

In terms of biological role, one of the early assembly proteins it binds 23S rRNA. One of the proteins that surrounds the polypeptide exit tunnel on the outside of the ribosome. Forms the main docking site for trigger factor binding to the ribosome. The sequence is that of Large ribosomal subunit protein uL23 from Campylobacter jejuni subsp. doylei (strain ATCC BAA-1458 / RM4099 / 269.97).